A 212-amino-acid polypeptide reads, in one-letter code: Imidazole glycerol phosphate synthase subunit HisH (212 aa).

Residues 3 to 211 enclose the Glutamine amidotransferase type-1 domain; sequence LIAVIDYDMG…VQQVQKLALV (209 aa). Cys-81 serves as the catalytic Nucleophile. Catalysis depends on residues His-186 and Glu-188.

In terms of assembly, heterodimer of HisH and HisF.

Its subcellular location is the cytoplasm. The catalysed reaction is 5-[(5-phospho-1-deoxy-D-ribulos-1-ylimino)methylamino]-1-(5-phospho-beta-D-ribosyl)imidazole-4-carboxamide + L-glutamine = D-erythro-1-(imidazol-4-yl)glycerol 3-phosphate + 5-amino-1-(5-phospho-beta-D-ribosyl)imidazole-4-carboxamide + L-glutamate + H(+). It carries out the reaction L-glutamine + H2O = L-glutamate + NH4(+). Its pathway is amino-acid biosynthesis; L-histidine biosynthesis; L-histidine from 5-phospho-alpha-D-ribose 1-diphosphate: step 5/9. Functionally, IGPS catalyzes the conversion of PRFAR and glutamine to IGP, AICAR and glutamate. The HisH subunit catalyzes the hydrolysis of glutamine to glutamate and ammonia as part of the synthesis of IGP and AICAR. The resulting ammonia molecule is channeled to the active site of HisF. The polypeptide is Imidazole glycerol phosphate synthase subunit HisH (Microcystis aeruginosa (strain NIES-843 / IAM M-2473)).